The chain runs to 186 residues: FMN-dependent NADH:quinone oxidoreductase 1 (186 aa).

FMN-binding positions include S15–S17 and M81–F84.

The protein belongs to the azoreductase type 1 family. As to quaternary structure, homodimer. FMN serves as cofactor.

The catalysed reaction is 2 a quinone + NADH + H(+) = 2 a 1,4-benzosemiquinone + NAD(+). It carries out the reaction N,N-dimethyl-1,4-phenylenediamine + anthranilate + 2 NAD(+) = 2-(4-dimethylaminophenyl)diazenylbenzoate + 2 NADH + 2 H(+). Quinone reductase that provides resistance to thiol-specific stress caused by electrophilic quinones. In terms of biological role, also exhibits azoreductase activity. Catalyzes the reductive cleavage of the azo bond in aromatic azo compounds to the corresponding amines. The chain is FMN-dependent NADH:quinone oxidoreductase 1 from Idiomarina loihiensis (strain ATCC BAA-735 / DSM 15497 / L2-TR).